A 244-amino-acid chain; its full sequence is Small ribosomal subunit protein uS3 (244 aa).

Residues Val-39 to Arg-107 form the KH type-2 domain. Positions Val-213–Arg-244 are disordered. Residues Glu-216 to Arg-244 show a composition bias toward basic and acidic residues.

Belongs to the universal ribosomal protein uS3 family. As to quaternary structure, part of the 30S ribosomal subunit. Forms a tight complex with proteins S10 and S14.

Its function is as follows. Binds the lower part of the 30S subunit head. Binds mRNA in the 70S ribosome, positioning it for translation. The protein is Small ribosomal subunit protein uS3 of Xanthomonas axonopodis pv. citri (strain 306).